Here is a 76-residue protein sequence, read N- to C-terminus: Small ribosomal subunit protein uS17 (76 aa).

The protein belongs to the universal ribosomal protein uS17 family. Part of the 30S ribosomal subunit.

Its function is as follows. One of the primary rRNA binding proteins, it binds specifically to the 5'-end of 16S ribosomal RNA. The chain is Small ribosomal subunit protein uS17 from Dinoroseobacter shibae (strain DSM 16493 / NCIMB 14021 / DFL 12).